Here is a 95-residue protein sequence, read N- to C-terminus: Large ribosomal subunit protein uL23 (95 aa).

The protein belongs to the universal ribosomal protein uL23 family. As to quaternary structure, part of the 50S ribosomal subunit. Contacts protein L29, and trigger factor when it is bound to the ribosome.

Its function is as follows. One of the early assembly proteins it binds 23S rRNA. One of the proteins that surrounds the polypeptide exit tunnel on the outside of the ribosome. Forms the main docking site for trigger factor binding to the ribosome. This chain is Large ribosomal subunit protein uL23, found in Shouchella clausii (strain KSM-K16) (Alkalihalobacillus clausii).